Reading from the N-terminus, the 371-residue chain is Neuropeptide S receptor (371 aa).

Topologically, residues 1 to 52 (MPANFTEGSFDSNGTGQMLDSSPVACTETVTFTEVVEGKEWGSFYYSFKTEQ) are extracellular. Asparagine 4 and asparagine 13 each carry an N-linked (GlcNAc...) asparagine glycan. Residues 53–73 (LITLWVLFVFTIVGNSVVLFS) traverse the membrane as a helical segment. Over 74–82 (TWRRKRKSR) the chain is Cytoplasmic. A helical membrane pass occupies residues 83-103 (MTFFVTQLAITDSFTGLVNIL). Residues 104–123 (TDIIWRFTGDFMAPDLVCRV) lie on the Extracellular side of the membrane. A disulfide bridge links cysteine 121 with cysteine 197. A helical membrane pass occupies residues 124–144 (VRYLQVVLLYASTYVLVSLSI). Residues 145-164 (DRYHAIVYPMKFLQGEKQAK) are Cytoplasmic-facing. Residues 165–185 (VLIVIAWSLSFLFSIPTLIIF) form a helical membrane-spanning segment. Residues 186–212 (GKRTLSNGEVQCWALWPDDSYWTPYMT) lie on the Extracellular side of the membrane. The chain crosses the membrane as a helical span at residues 213-233 (IVAFLVYFIPLTIISVMYGIV). The Cytoplasmic segment spans residues 234-275 (IRTIWIKSKTYETVISNCSDGKLCSSYNRGLISKAKIKAIKY). Residues 276–296 (SIVIILAFICCWSPYFLFDIL) traverse the membrane as a helical segment. Residues 297–312 (DNFNLLPDTQERFYAS) lie on the Extracellular side of the membrane. A helical transmembrane segment spans residues 313-333 (VIIQNLPALNSAINPLIYCVF). Residues 334 to 371 (SSSISFPCGERRSQDSIMTFRERTERHEMQILSKPEFI) lie on the Cytoplasmic side of the membrane.

This sequence belongs to the G-protein coupled receptor 1 family. Vasopressin/oxytocin receptor subfamily.

It localises to the cell membrane. Its function is as follows. G-protein coupled receptor for neuropeptide S (NPS). Promotes mobilization of intracellular Ca(2+) stores. Inhibits cell growth in response to NPS binding. Involved in pathogenesis of asthma and other IgE-mediated diseases. In Macaca mulatta (Rhesus macaque), this protein is Neuropeptide S receptor (NPSR1).